The following is a 362-amino-acid chain: Phosphoserine aminotransferase (362 aa).

L-glutamate contacts are provided by S9 and R42. Residues 76–77 (GR), W102, T153, D174, and Q197 each bind pyridoxal 5'-phosphate. The residue at position 198 (K198) is an N6-(pyridoxal phosphate)lysine. Residue 239 to 240 (NT) participates in pyridoxal 5'-phosphate binding.

The protein belongs to the class-V pyridoxal-phosphate-dependent aminotransferase family. SerC subfamily. As to quaternary structure, homodimer. The cofactor is pyridoxal 5'-phosphate.

The protein resides in the cytoplasm. The catalysed reaction is O-phospho-L-serine + 2-oxoglutarate = 3-phosphooxypyruvate + L-glutamate. It carries out the reaction 4-(phosphooxy)-L-threonine + 2-oxoglutarate = (R)-3-hydroxy-2-oxo-4-phosphooxybutanoate + L-glutamate. Its pathway is amino-acid biosynthesis; L-serine biosynthesis; L-serine from 3-phospho-D-glycerate: step 2/3. It participates in cofactor biosynthesis; pyridoxine 5'-phosphate biosynthesis; pyridoxine 5'-phosphate from D-erythrose 4-phosphate: step 3/5. Functionally, catalyzes the reversible conversion of 3-phosphohydroxypyruvate to phosphoserine and of 3-hydroxy-2-oxo-4-phosphonooxybutanoate to phosphohydroxythreonine. The protein is Phosphoserine aminotransferase of Escherichia coli O157:H7.